Here is a 415-residue protein sequence, read N- to C-terminus: Mitogen-activated protein kinase kinae MST7 (415 aa).

Positions 1–37 (MADPFAPRTMKRRNVKGLALTPAAPKPPPTAENAPIH) are disordered. The 266-residue stretch at 61–326 (LEVIKDLGSG…EELFERDPFV (266 aa)) folds into the Protein kinase domain. ATP is bound by residues 67 to 75 (LGSGNGGTV) and lysine 90. Positions 363–409 (DLLRSSDSPTATYHGDDRPLETPTSAYRVDPRRGPAEGSAGLADQVD) are disordered.

This sequence belongs to the protein kinase superfamily. STE Ser/Thr protein kinase family. MAP kinase kinase subfamily. In terms of assembly, homodimer. Interacts with the adapter protein MST50. Interacts with TRX2.

It catalyses the reaction L-seryl-[protein] + ATP = O-phospho-L-seryl-[protein] + ADP + H(+). It carries out the reaction L-threonyl-[protein] + ATP = O-phospho-L-threonyl-[protein] + ADP + H(+). Its function is as follows. Mitogen-activated protein kinase kinase; part of the MST11-MST7-PMK1 MAP kinase (MAPK) cascade that is essential for appressorium formation, penetration and invasive growth. The MST11-MST7-PMK1 MAP kinase cascade transduces signals from the cell surface sensors MDB2 and SHO1 that recognize various surface signals such as surface hydrophobicity, cutin monomers, and rice leaf waxes. MST7 acts as the upstream MAPKK that directly phosphorylates MAP kinase PMK1. The polypeptide is Mitogen-activated protein kinase kinae MST7 (Pyricularia oryzae (strain 70-15 / ATCC MYA-4617 / FGSC 8958) (Rice blast fungus)).